A 275-amino-acid polypeptide reads, in one-letter code: 4-diphosphocytidyl-2-C-methyl-D-erythritol kinase (275 aa).

The active site involves Lys14. An ATP-binding site is contributed by 98–108 (PMGAGLGGGSS). Asp140 is an active-site residue.

Belongs to the GHMP kinase family. IspE subfamily.

It carries out the reaction 4-CDP-2-C-methyl-D-erythritol + ATP = 4-CDP-2-C-methyl-D-erythritol 2-phosphate + ADP + H(+). Its pathway is isoprenoid biosynthesis; isopentenyl diphosphate biosynthesis via DXP pathway; isopentenyl diphosphate from 1-deoxy-D-xylulose 5-phosphate: step 3/6. Functionally, catalyzes the phosphorylation of the position 2 hydroxy group of 4-diphosphocytidyl-2C-methyl-D-erythritol. The protein is 4-diphosphocytidyl-2-C-methyl-D-erythritol kinase of Francisella tularensis subsp. tularensis (strain FSC 198).